Reading from the N-terminus, the 317-residue chain is Small ribosomal subunit protein uS2 (317 aa).

Residues 277–317 (SDWTAPAANPANAAAAGAPAPAPAAATTTESWGGSGAENWG) form a disordered region. Low complexity predominate over residues 281-302 (APAANPANAAAAGAPAPAPAAA).

This sequence belongs to the universal ribosomal protein uS2 family. Component of the small ribosomal subunit. Mature ribosomes consist of a small (40S) and a large (60S) subunit. The 40S subunit contains about 33 different proteins and 1 molecule of RNA (18S). The 60S subunit contains about 49 different proteins and 3 molecules of RNA (28S, 5.8S and 5S). Interacts with ribosomal protein S21.

The protein localises to the cytoplasm. Its function is as follows. Required for the assembly and/or stability of the 40S ribosomal subunit. Required for the processing of the 20S rRNA-precursor to mature 18S rRNA in a late step of the maturation of 40S ribosomal subunits. This chain is Small ribosomal subunit protein uS2, found in Urechis caupo (Innkeeper worm).